A 415-amino-acid chain; its full sequence is Branched-chain-amino-acid aminotransferase, cytosolic (415 aa).

The residue at position 244 (lysine 244) is an N6-(pyridoxal phosphate)lysine.

This sequence belongs to the class-IV pyridoxal-phosphate-dependent aminotransferase family. Requires pyridoxal 5'-phosphate as cofactor.

The protein localises to the cytoplasm. It catalyses the reaction L-leucine + 2-oxoglutarate = 4-methyl-2-oxopentanoate + L-glutamate. The catalysed reaction is L-isoleucine + 2-oxoglutarate = (S)-3-methyl-2-oxopentanoate + L-glutamate. The enzyme catalyses L-valine + 2-oxoglutarate = 3-methyl-2-oxobutanoate + L-glutamate. Its function is as follows. Catalyzes the first reaction in the catabolism of the essential branched chain amino acids leucine, isoleucine, and valine. In Caenorhabditis elegans, this protein is Branched-chain-amino-acid aminotransferase, cytosolic (bcat-1).